The chain runs to 257 residues: High affinity immunoglobulin epsilon receptor subunit alpha (257 aa).

The N-terminal stretch at 1-25 (MAPAMESPTLLCVALLFFAPDGVLA) is a signal peptide. The Extracellular segment spans residues 26 to 205 (VPQKPKVSLN…KAPREKYWLQ (180 aa)). 2 Ig-like domains span residues 30 to 110 (PKVS…EVFS) and 111 to 193 (DWLL…LNIT). Residues Asn-46, Asn-67, Asn-75, Asn-99, Asn-160, Asn-165, and Asn-191 are each glycosylated (N-linked (GlcNAc...) asparagine). The cysteines at positions 51 and 93 are disulfide-linked. The cysteines at positions 132 and 176 are disulfide-linked. The helical transmembrane segment at 206–224 (FFIPLLVVILFAVDTGLFI) threads the bilayer. Topologically, residues 225 to 257 (STQQQVTFLLKIKRTRKGFRLLNPHPKPNPKNN) are cytoplasmic.

In terms of assembly, tetramer of an alpha chain, a beta chain, and two disulfide linked gamma chains. Interacts with IGHE (via CH3 region). In terms of tissue distribution, expressed in eosinophils.

The protein resides in the cell membrane. High-affinity receptor for immunoglobulin epsilon/IgE. Mediates IgE effector functions in myeloid cells. Upon IgE binding and antigen/allergen cross-linking initiates signaling pathways that lead to myeloid cell activation and differentiation. On mast cells, basophils and eosinophils stimulates the secretion of vasoactive amines, lipid mediators and cytokines that contribute to inflammatory response, tissue remodeling and cytotoxicity against microbes. Triggers the immediate hypersensitivity response to allergens as a host defense mechanism against helminth parasites, pathogenic bacteria and venom toxicity. When dysregulated, it can elicit harmful life-threatening allergic and anaphylactic reactions. This is High affinity immunoglobulin epsilon receptor subunit alpha (FCER1A) from Homo sapiens (Human).